The sequence spans 301 residues: Pantothenate synthetase (301 aa).

ATP is bound at residue 30-37 (MGNLHEGH). Residue His-37 is the Proton donor of the active site. (R)-pantoate is bound at residue Gln-61. Gln-61 contacts beta-alanine. An ATP-binding site is contributed by 149 to 152 (GEKD). Gln-155 contacts (R)-pantoate. ATP-binding positions include Val-178 and 186-189 (MSSR).

It belongs to the pantothenate synthetase family. As to quaternary structure, homodimer.

The protein localises to the cytoplasm. It catalyses the reaction (R)-pantoate + beta-alanine + ATP = (R)-pantothenate + AMP + diphosphate + H(+). It functions in the pathway cofactor biosynthesis; (R)-pantothenate biosynthesis; (R)-pantothenate from (R)-pantoate and beta-alanine: step 1/1. Functionally, catalyzes the condensation of pantoate with beta-alanine in an ATP-dependent reaction via a pantoyl-adenylate intermediate. This chain is Pantothenate synthetase, found in Vibrio vulnificus (strain CMCP6).